Here is a 245-residue protein sequence, read N- to C-terminus: uncharacterized protein (245 aa).

This is an uncharacterized protein from Mycobacterium tuberculosis (strain CDC 1551 / Oshkosh).